Consider the following 404-residue polypeptide: Argininosuccinate synthase (404 aa).

ATP is bound at residue 9 to 17 (AYSGGLDTS). Position 86 (Tyr86) interacts with L-citrulline. Gly116 is an ATP binding site. L-aspartate is bound by residues Thr118, Asn122, and Asp123. Asn122 is an L-citrulline binding site. L-citrulline is bound by residues Arg126, Ser174, Ser183, Glu259, and Tyr271.

It belongs to the argininosuccinate synthase family. Type 1 subfamily. In terms of assembly, homotetramer.

The protein localises to the cytoplasm. The enzyme catalyses L-citrulline + L-aspartate + ATP = 2-(N(omega)-L-arginino)succinate + AMP + diphosphate + H(+). It functions in the pathway amino-acid biosynthesis; L-arginine biosynthesis; L-arginine from L-ornithine and carbamoyl phosphate: step 2/3. In Listeria welshimeri serovar 6b (strain ATCC 35897 / DSM 20650 / CCUG 15529 / CIP 8149 / NCTC 11857 / SLCC 5334 / V8), this protein is Argininosuccinate synthase.